The sequence spans 385 residues: Deoxyguanosinetriphosphate triphosphohydrolase-like protein (385 aa).

Over residues 1 to 14 the composition is skewed to basic and acidic residues; that stretch reads MTEGVEGRSQERSD. The interval 1–23 is disordered; the sequence is MTEGVEGRSQERSDLAGFAARSA. The HD domain maps to 75-204; sequence RLTHSLEVAQ…INYADEIAYN (130 aa).

The protein belongs to the dGTPase family. Type 2 subfamily.

This Geobacter metallireducens (strain ATCC 53774 / DSM 7210 / GS-15) protein is Deoxyguanosinetriphosphate triphosphohydrolase-like protein.